Here is a 391-residue protein sequence, read N- to C-terminus: PPE family protein PPE18 (391 aa).

This sequence belongs to the mycobacterial PPE family. As to quaternary structure, interacts with human TLR2.

It localises to the secreted. Its subcellular location is the cell wall. The protein localises to the cell surface. Could be a crucial virulence factor for intracellular survival of M.tuberculosis. Favors development of Th2-type response, and down-regulates the pro-inflammatory and Th1-type response. Specifically interacts with the human Toll-like receptor 2 (TLR2), leading to an early and sustained activation of p38 MAPK, which induces IL-10 production and activates Th2-type immune response. Also inhibits pro-inflammatory cytokines IL-12p40 and TNF-alpha production. Acts by up-regulating the expression as well as tyrosine phosphorylation of suppressor of cytokine signaling 3 (SOCS-3), leading to the inhibition of phosphorylation of I-kappa-B-alpha, thereby preventing nuclear translocation of the NF-kappa-B/REL subunits and expression of NF-kappa-B regulated genes like IL-12 and TNF-alpha. Induction of SOCS-3 probably depends on the activation of p38 MAPK. The sequence is that of PPE family protein PPE18 from Mycobacterium tuberculosis (strain ATCC 25618 / H37Rv).